A 218-amino-acid polypeptide reads, in one-letter code: CTP-dependent diacylglycerol kinase 1 (218 aa).

The Lumenal segment spans residues 1–19; that stretch reads MSTKLTWSQWSKKHEIPRK. A helical transmembrane segment spans residues 20-37; it reads ALHTSIGFFALLLQGCGY. A topological domain (cytoplasmic) is located at residue H38. A helical membrane pass occupies residues 39–59; that stretch reads AAQIIPVIEIGFIPAFTGDVI. Over 60–88 the chain is Lumenal; that stretch reads RFNWPAFSRLYNRVIGPLMRESEKNAWNG. Residues 89 to 109 traverse the membrane as a helical segment; the sequence is VIFYMIGVWIVLKVFPEEIAV. Topologically, residues 110-142 are cytoplasmic; that stretch reads MSVLLLSWCDTTASTVGRKWGKYTPKIAKNKSL. Residues 143 to 163 traverse the membrane as a helical segment; that stretch reads AGSLGAFVCGVFCCYVYWGLF. The Lumenal segment spans residues 164 to 179; the sequence is RTGPDSLAAQSRIPFP. Helical transmembrane passes span 180–200 and 201–217; these read WLCL…VWGL and DDNL…LYLI. M218 is a topological domain (lumenal).

Belongs to the DGK1 family. Ca(2+) serves as cofactor. It depends on Mg(2+) as a cofactor.

Its subcellular location is the endoplasmic reticulum membrane. It localises to the nucleus membrane. The catalysed reaction is a 1,2-diacyl-sn-glycerol + CTP = a 1,2-diacyl-sn-glycero-3-phosphate + CDP + H(+). Functionally, CTP-dependent diacylglycerol kinase that catalyzes the phosphorylation of diacylglycerol (DAG) to phosphatidate (PA). Controls phosphatidate levels at the nuclear envelope. Counteracts the activity of PA phosphatase ned1. May be involved in vesicle trafficking between the endoplasmic reticulum and the Golgi apparatus. Involved in pre-tRNA splicing. The chain is CTP-dependent diacylglycerol kinase 1 (ptp4) from Schizosaccharomyces pombe (strain 972 / ATCC 24843) (Fission yeast).